The primary structure comprises 303 residues: MVNRTVEEILALKKQRNAIILAHNYQREEVQEIADFVGDSLELSRQATKVDCDVIVFCGVHFMAETAAILNPDKTVLLPEIDAGCPMADTVDVEELKRWIDRYPYAPIVSYVNTTAEVKALSYACCTSANAPQIVKAVPFSSIIFVPDKNLADWVKKHVPEKDIIAWNGFCPTHHMIKKEDIIRAKKAHPDALVVVHPECRPEVIELADHVASTSGMVRFARAASQKEFIIGTEVGLLYRLKKENPDKVFYPIKKTMICPNMKITTLESILTALKENQYVIKVPEDIRIKAYEAVQRMLTLIS.

Positions 23 and 40 each coordinate iminosuccinate. Cysteine 85 lines the [4Fe-4S] cluster pocket. Iminosuccinate is bound by residues 111–113 and serine 128; that span reads YVN. Cysteine 171 is a binding site for [4Fe-4S] cluster. Residues 197–199 and threonine 214 each bind iminosuccinate; that span reads HPE. Residue cysteine 259 participates in [4Fe-4S] cluster binding.

The protein belongs to the quinolinate synthase family. Type 2 subfamily. It depends on [4Fe-4S] cluster as a cofactor.

Its subcellular location is the cytoplasm. It catalyses the reaction iminosuccinate + dihydroxyacetone phosphate = quinolinate + phosphate + 2 H2O + H(+). It participates in cofactor biosynthesis; NAD(+) biosynthesis; quinolinate from iminoaspartate: step 1/1. Functionally, catalyzes the condensation of iminoaspartate with dihydroxyacetone phosphate to form quinolinate. In Thermodesulfovibrio yellowstonii (strain ATCC 51303 / DSM 11347 / YP87), this protein is Quinolinate synthase.